The primary structure comprises 285 residues: NADH-cytochrome b5 reductase 1 (285 aa).

A helical membrane pass occupies residues 7–23; sequence LATFSVLVLFYKLFTYS. The 105-residue stretch at 40-144 folds into the FAD-binding FR-type domain; it reads TEFREFELVE…SGPRGFYEYV (105 aa). FAD is bound by residues 124–139 and 150–182; these read GDMKIGEKINISGPRG and HLAMVAGGTGITPMFQIMKAIARDPSDKTRVTL.

Belongs to the flavoprotein pyridine nucleotide cytochrome reductase family. As to quaternary structure, monomer. Component of the 2-(3-amino-3-carboxypropyl)histidine synthase complex composed of DPH1, DPH2, DPH3 and a NADH-dependent reductase, predominantly CBR1. FAD serves as cofactor.

It localises to the mitochondrion outer membrane. The enzyme catalyses 2 Fe(III)-[cytochrome b5] + NADH = 2 Fe(II)-[cytochrome b5] + NAD(+) + H(+). The catalysed reaction is 2 Fe(3+)-[Dph3] + NADH = 2 Fe(2+)-[Dph3] + NAD(+) + H(+). It functions in the pathway protein modification; peptidyl-diphthamide biosynthesis. Functionally, NADH-dependent reductase for DPH3 and cytochrome b5. Required for the first step of diphthamide biosynthesis, a post-translational modification of histidine which occurs in elongation factor 2. DPH1 and DPH2 transfer a 3-amino-3-carboxypropyl (ACP) group from S-adenosyl-L-methionine (SAM) to a histidine residue, the reaction is assisted by a reduction system comprising DPH3 and a NADH-dependent reductase, predominantly CBR1. By reducing DPH3, also involved in the formation of the tRNA wobble base modification mcm5s 2U (5-methoxycarbonylmethyl-2-thiouridine), mediated by the elongator complex. The cytochrome b5/NADH cytochrome b5 reductase electron transfer system supports the catalytic activity of several sterol biosynthetic enzymes. The protein is NADH-cytochrome b5 reductase 1 (CBR1) of Candida glabrata (strain ATCC 2001 / BCRC 20586 / JCM 3761 / NBRC 0622 / NRRL Y-65 / CBS 138) (Yeast).